We begin with the raw amino-acid sequence, 44 residues long: Photosystem I reaction center subunit IX (44 aa).

The chain crosses the membrane as a helical span at residues 7 to 27; it reads YLSTAPVLTTLWFGSLAGLLI.

The protein belongs to the PsaJ family.

Its subcellular location is the plastid. It localises to the chloroplast thylakoid membrane. Functionally, may help in the organization of the PsaE and PsaF subunits. This is Photosystem I reaction center subunit IX from Phalaenopsis aphrodite subsp. formosana (Moth orchid).